Consider the following 239-residue polypeptide: Endolytic peptidoglycan transglycosylase RlpA (239 aa).

The first 25 residues, 1-25, serve as a signal peptide directing secretion; that stretch reads MTLTRKTLFLLTAAFGTHSLQTASA. The 80-residue stretch at 160–239 folds into the SPOR domain; sequence VAENKDIFID…GMVRAVLTAG (80 aa).

The protein belongs to the RlpA family.

Lytic transglycosylase with a strong preference for naked glycan strands that lack stem peptides. The polypeptide is Endolytic peptidoglycan transglycosylase RlpA (Neisseria meningitidis serogroup B (strain ATCC BAA-335 / MC58)).